The chain runs to 274 residues: Copper chaperone for superoxide dismutase (274 aa).

The HMA domain occupies 11–74 (MCALEFTVQM…LLESTGRQAV (64 aa)). Residues Cys-22 and Cys-25 each coordinate Cu cation. Lys-76 participates in a covalent cross-link: Glycyl lysine isopeptide (Lys-Gly) (interchain with G-Cter in ubiquitin). The interval 88–234 (AAVAIMEGSG…LACGIIARSA (147 aa)) is superoxide dismutase-like. Cysteines 141 and 227 form a disulfide. Zn(2+) is bound by residues His-147, His-155, His-164, and Asp-167. Residues Lys-189, Lys-216, and Lys-241 each participate in a glycyl lysine isopeptide (Lys-Gly) (interchain with G-Cter in ubiquitin) cross-link. 2 residues coordinate Cu cation: Cys-244 and Cys-246. Ser-267 carries the post-translational modification Phosphoserine.

This sequence in the C-terminal section; belongs to the Cu-Zn superoxide dismutase family. Homodimer, and heterodimer with SOD1. Interacts with COMMD1. Interacts with XIAP/BIRC4. Interacts with SLC31A1(via C-terminal domain); this interaction is Cu(1+)-mediated. The heterodimer CCS:SOD1 interacts with SLC31A1; this heterotrimer is Cu(1+)-mediated and its maintenance is regulated through SOD1 activation. Cu(2+) serves as cofactor. Zn(2+) is required as a cofactor. In terms of processing, ubiquitinion by XIAP/BIRC4 leads to enhancement of its chaperone activity toward its physiologic target, SOD1, rather than proteasomal degradation. XIAP/BIRC4 preferentially ubiquitinates at Lys-241.

Its subcellular location is the cytoplasm. In terms of biological role, delivers copper to copper zinc superoxide dismutase (SOD1). The protein is Copper chaperone for superoxide dismutase of Rattus norvegicus (Rat).